A 273-amino-acid chain; its full sequence is Eukaryotic translation initiation factor 3 subunit G-2 (273 aa).

The interval 168 to 192 (PPFMKDGGGGSGGKNWGRGRDRDDS) is disordered. Gly residues predominate over residues 173-183 (DGGGGSGGKNW). Residues 193–271 (SAVRISNLSE…LILCVEWSKP (79 aa)) form the RRM domain.

This sequence belongs to the eIF-3 subunit G family. Component of the eukaryotic translation initiation factor 3 (eIF-3) complex. The eIF-3 complex interacts with pix.

It localises to the cytoplasm. Functionally, RNA-binding component of the eukaryotic translation initiation factor 3 (eIF-3) complex, which is involved in protein synthesis of a specialized repertoire of mRNAs and, together with other initiation factors, stimulates binding of mRNA and methionyl-tRNAi to the 40S ribosome. The eIF-3 complex specifically targets and initiates translation of a subset of mRNAs involved in cell proliferation. This subunit can bind 18S rRNA. This chain is Eukaryotic translation initiation factor 3 subunit G-2, found in Drosophila erecta (Fruit fly).